Here is a 403-residue protein sequence, read N- to C-terminus: Protein IQ-DOMAIN 23 (403 aa).

A disordered region spans residues 1–43; the sequence is MGFFGRLFGSKKKSDKAASSRDKRRWSFTTRSSNSSKRAPAVT. The Nuclear localization signal motif lies at 10–17; sequence SKKKSDKA. Residues 27 to 43 are compositionally biased toward polar residues; the sequence is SFTTRSSNSSKRAPAVT. Positions 115 to 133 are calmodulin-binding; the sequence is QENIAAMKIQSAFRGYLAR. IQ domains are found at residues 116–144 and 145–167; these read ENIAAMKIQSAFRGYLARRALRALKALVK and LQALVRGHIVRKQTADMLRRMQT. Disordered stretches follow at residues 176–208, 242–301, and 381–403; these read RARASRSSHSSASFHSSTALLFPSSSSSPRSLH, ILEV…PTSR, and GGDSDRLNRNQSAKSRMHSSFLV. Residues 257–267 are compositionally biased toward basic and acidic residues; that stretch reads LRSERNNESPR.

This sequence belongs to the IQD family. In terms of assembly, binds to multiple calmodulin (CaM) in the presence of Ca(2+) and CaM-like proteins.

The protein localises to the nucleus. It localises to the nucleolus. Its subcellular location is the cytoplasm. It is found in the cytoskeleton. The protein resides in the cell membrane. In terms of biological role, may be involved in cooperative interactions with calmodulins or calmodulin-like proteins. Recruits calmodulin proteins to microtubules, thus being a potential scaffold in cellular signaling and trafficking. May associate with nucleic acids and regulate gene expression at the transcriptional or post-transcriptional level. The sequence is that of Protein IQ-DOMAIN 23 from Arabidopsis thaliana (Mouse-ear cress).